A 146-amino-acid chain; its full sequence is Large ribosomal subunit protein bL9 (146 aa).

This sequence belongs to the bacterial ribosomal protein bL9 family.

Binds to the 23S rRNA. This is Large ribosomal subunit protein bL9 from Nautilia profundicola (strain ATCC BAA-1463 / DSM 18972 / AmH).